A 20-amino-acid polypeptide reads, in one-letter code: Pregnancy-associated glycoprotein 71D (20 aa).

Residue asparagine 4 is glycosylated (N-linked (GlcNAc...) asparagine).

The protein belongs to the peptidase A1 family. As to expression, chorionic epithelium (trophectoderm) and placental cotyledons.

The protein resides in the secreted. Its subcellular location is the extracellular space. The chain is Pregnancy-associated glycoprotein 71D from Bison bonasus (European bison).